We begin with the raw amino-acid sequence, 492 residues long: Transmembrane protein 39B (492 aa).

Residues 1-53 (MGGRRGPNRTSYYRNPLCEPGSSGASGGGHSSSASVSSVRSRSRTTSGTGLSS) are disordered. The N-linked (GlcNAc...) asparagine glycan is linked to Asn8. The segment covering 31 to 53 (SSSASVSSVRSRSRTTSGTGLSS) has biased composition (low complexity). Transmembrane regions (helical) follow at residues 77-97 (SILFELQLFFCQLIALFVHYI), 115-135 (TSLNFHLIDFNLLMVTAIVLG), 153-175 (SLFRSILLFLTRFTVLTATGWSL), 185-205 (TYSFLNLLFLCYPFGMYIPFL), 288-308 (EVLVSSMLSAYYVAFVPVWFV), 322-342 (LFLLVSISTSVILMQHLLPAS), 421-441 (ILNILLLLEGAVIVYQLYSLM), and 447-467 (HQTISLALILFSNYYAFFKLL).

The protein belongs to the TMEM39 family.

It is found in the endoplasmic reticulum membrane. Its function is as follows. May protect the cells against DNA damage caused by exposure to the cold-warming stress and facilitates tissue damage repair during the recovery phase. The sequence is that of Transmembrane protein 39B from Mus musculus (Mouse).